The sequence spans 157 residues: Protein NrdI (157 aa).

Belongs to the NrdI family.

In terms of biological role, probably involved in ribonucleotide reductase function. The polypeptide is Protein NrdI (Mycoplasma capricolum subsp. capricolum (strain California kid / ATCC 27343 / NCTC 10154)).